We begin with the raw amino-acid sequence, 135 residues long: Large ribosomal subunit protein bL19 (135 aa).

This sequence belongs to the bacterial ribosomal protein bL19 family.

Functionally, this protein is located at the 30S-50S ribosomal subunit interface and may play a role in the structure and function of the aminoacyl-tRNA binding site. The sequence is that of Large ribosomal subunit protein bL19 from Xanthomonas oryzae pv. oryzae (strain KACC10331 / KXO85).